The sequence spans 261 residues: tRNA pseudouridine synthase A (261 aa).

The active-site Nucleophile is the Asp51. Tyr109 provides a ligand contact to substrate.

This sequence belongs to the tRNA pseudouridine synthase TruA family. In terms of assembly, homodimer.

It carries out the reaction uridine(38/39/40) in tRNA = pseudouridine(38/39/40) in tRNA. Functionally, formation of pseudouridine at positions 38, 39 and 40 in the anticodon stem and loop of transfer RNAs. The protein is tRNA pseudouridine synthase A of Methylobacillus flagellatus (strain ATCC 51484 / DSM 6875 / VKM B-1610 / KT).